A 435-amino-acid chain; its full sequence is Matrix remodeling-associated protein 8 (435 aa).

An N-terminal signal peptide occupies residues 1–22; it reads MEIRCKVLVCHIILLHSATVYL. Residues 23 to 337 lie on the Extracellular side of the membrane; it reads YSVPASQQNP…QESRLHFFQQ (315 aa). 2 consecutive Ig-like V-type domains span residues 32 to 158 and 156 to 293; these read PESV…LNIT and NITK…LSVS. N-linked (GlcNAc...) asparagine glycosylation is found at Asn41, Asn120, Asn156, Asn245, and Asn324. Residues Cys54 and Cys138 are joined by a disulfide bond. Cysteines 187 and 273 form a disulfide. The helical transmembrane segment at 338-358 threads the bilayer; the sequence is LGYILATLLLFILLLTAVILI. At 359–435 the chain is on the cytoplasmic side; that stretch reads TRKHQKRGYA…DLELRKEYCK (77 aa).

Homodimer in cis. Does not appear to form trans-homodimers.

It localises to the cell membrane. Functionally, transmembrane protein which can modulate activity of various signaling pathways, probably via binding to integrin ITGAV:ITGB3. Mediates heterophilic cell-cell interactions in vitro. The polypeptide is Matrix remodeling-associated protein 8 (mxra8) (Xenopus laevis (African clawed frog)).